The primary structure comprises 676 residues: Cysteine-rich receptor-like protein kinase 4 (676 aa).

Positions 1–16 (MSFFWLFPFLLHLSFA) are cleaved as a signal peptide. At 17–287 (DSLSPLSAPV…ISERGKGRNS (271 aa)) the chain is on the extracellular side. 2 consecutive Gnk2-homologous domains span residues 31 to 135 (HLNH…HRNI) and 146 to 246 (ILLN…NYSF). N-linked (GlcNAc...) asparagine glycans are attached at residues Asn-33, Asn-46, Asn-64, Asn-152, Asn-181, Asn-243, and Asn-248. Positions 252–279 (TRSSSPPSLPPRSTPQQQLKLAPPPLIS) are disordered. Asn-286 carries an N-linked (GlcNAc...) asparagine glycan. The chain crosses the membrane as a helical span at residues 288 to 308 (SVIIVVVVPIIALLLLFVAFF). The Cytoplasmic portion of the chain corresponds to 309 to 676 (SLRAKKTRTN…DASITNVTPR (368 aa)). A Protein kinase domain is found at 351–631 (FCETNKLGQG…QMLTTSSIAL (281 aa)). ATP contacts are provided by residues 357-365 (LGQGGFGEV) and Lys-379. Tyr-424 bears the Phosphotyrosine mark. The Proton acceptor role is filled by Asp-476. Residue Thr-516 is modified to Phosphothreonine. At Tyr-524 the chain carries Phosphotyrosine.

This sequence belongs to the protein kinase superfamily. Ser/Thr protein kinase family. CRK subfamily.

It is found in the membrane. It catalyses the reaction L-seryl-[protein] + ATP = O-phospho-L-seryl-[protein] + ADP + H(+). The enzyme catalyses L-threonyl-[protein] + ATP = O-phospho-L-threonyl-[protein] + ADP + H(+). This Arabidopsis thaliana (Mouse-ear cress) protein is Cysteine-rich receptor-like protein kinase 4 (CRK4).